The sequence spans 256 residues: Enolase-phosphatase E1 (256 aa).

Mg(2+) is bound by residues aspartate 13 and glutamate 15. Residues 127-128 (SS) and lysine 175 contribute to the substrate site. Aspartate 202 is a Mg(2+) binding site.

Belongs to the HAD-like hydrolase superfamily. MasA/MtnC family. Monomer. Mg(2+) serves as cofactor.

The protein localises to the cytoplasm. It localises to the nucleus. It catalyses the reaction 5-methylsulfanyl-2,3-dioxopentyl phosphate + H2O = 1,2-dihydroxy-5-(methylsulfanyl)pent-1-en-3-one + phosphate. It functions in the pathway amino-acid biosynthesis; L-methionine biosynthesis via salvage pathway; L-methionine from S-methyl-5-thio-alpha-D-ribose 1-phosphate: step 3/6. The protein operates within amino-acid biosynthesis; L-methionine biosynthesis via salvage pathway; L-methionine from S-methyl-5-thio-alpha-D-ribose 1-phosphate: step 4/6. Bifunctional enzyme that catalyzes the enolization of 2,3-diketo-5-methylthiopentyl-1-phosphate (DK-MTP-1-P) into the intermediate 2-hydroxy-3-keto-5-methylthiopentenyl-1-phosphate (HK-MTPenyl-1-P), which is then dephosphorylated to form the acireductone 1,2-dihydroxy-3-keto-5-methylthiopentene (DHK-MTPene). The polypeptide is Enolase-phosphatase E1 (utr4) (Botryotinia fuckeliana (strain B05.10) (Noble rot fungus)).